Here is a 348-residue protein sequence, read N- to C-terminus: 2-methyl-6-phytyl-1,4-hydroquinone methyltransferase 2, chloroplastic (348 aa).

A disordered region spans residues 1–48; that stretch reads MAMASSAYAPAGGVGTHSAPGRIRPPRGLGFSTTTTKSRPLVLTRRGG. A chloroplast-targeting transit peptide spans 1-59; sequence MAMASSAYAPAGGVGTHSAPGRIRPPRGLGFSTTTTKSRPLVLTRRGGGGGNISVARLR. At 60 to 317 the chain is on the chloroplast intermembrane side; it reads CAASSSSAAA…PVNPITFLFR (258 aa). The tract at residues 125–134 is SAM motif I; sequence VVDVGGGTGF. The interval 170–183 is SAM motif II; it reads VTIMEGDAEDLPFP. The tract at residues 211–224 is SAM motif III; sequence RVLRLGGVACMIGP. Residues 318–338 form a helical membrane-spanning segment; that stretch reads FLMGTICAAYYVLVPIYMWIK. Residues 339-348 lie on the Stromal side of the membrane; the sequence is DQIVPKGMPI.

It belongs to the class I-like SAM-binding methyltransferase superfamily. MPBQ/MBSQ MT family.

It localises to the plastid. The protein resides in the chloroplast inner membrane. It catalyses the reaction 2-methyl-6-phytyl-1,4-benzene-1,4-diol + S-adenosyl-L-methionine = 2,3-dimethyl-6-phytylbenzene-1,4-diol + S-adenosyl-L-homocysteine + H(+). It carries out the reaction 2-methyl-6-(all-trans-nonaprenyl)benzene-1,4-diol + S-adenosyl-L-methionine = plastoquinol-9 + S-adenosyl-L-homocysteine + H(+). The catalysed reaction is 6-geranylgeranyl-2-methylbenzene-1,4-diol + S-adenosyl-L-methionine = 6-geranylgeranyl-2,3-dimethylbenzene-1,4-diol + S-adenosyl-L-homocysteine + H(+). It functions in the pathway cofactor biosynthesis; tocopherol biosynthesis. Functionally, involved in a key methylation step in both tocopherols (vitamin E) and plastoquinone synthesis. Catalyzes the conversion of 2-methyl-6-phytyl-1,4-hydroquinone (MPBQ) to 2,3-dimethyl-6-phytyl-1,4-hydroquinone (DMPQ, a substrate for tocopherol cyclase), and 2-methyl-6-solanyl-1,4-benzoquinone (MSBQ) to plastoquinone. This is 2-methyl-6-phytyl-1,4-hydroquinone methyltransferase 2, chloroplastic from Oryza sativa subsp. japonica (Rice).